An 80-amino-acid chain; its full sequence is Inner kinetochore subunit MHF2 (80 aa).

This sequence belongs to the CENP-X/MHF2 family. In terms of assembly, the MHF histone-fold complex is a heterotetramer of 2 MHF1-MHF2 heterodimers. Together with MPH1/FANCM, forms the FANCM-MHF complex. Component of the inner kinetochore constitutive centromere-associated network (CCAN) (also known as central kinetochore CTF19 complex in yeast), which is composed of at least AME1, CHL4, CNN1, CTF3, CTF19, IML3, MCM16, MCM21, MCM22, MHF1, MHF2, MIF2, NKP1, NKP2, OKP1 and WIP1.

Functionally, DNA-binding component of a FANCM-MHF complex involved in DNA damage repair and genome maintenance. FANCM-MHF promotes gene conversion at blocked replication forks, probably by reversal of the stalled fork. Component of the kinetochore, a multiprotein complex that assembles on centromeric DNA and attaches chromosomes to spindle microtubules, mediating chromosome segregation and sister chromatid segregation during meiosis and mitosis. Component of the inner kinetochore constitutive centromere-associated network (CCAN), which serves as a structural platform for outer kinetochore assembly. In Saccharomyces cerevisiae (strain ATCC 204508 / S288c) (Baker's yeast), this protein is Inner kinetochore subunit MHF2.